An 86-amino-acid polypeptide reads, in one-letter code: Large ribosomal subunit protein bL27 (86 aa).

Positions 1 to 23 (MAHKKGTGSTRNGRDSNSKRLGV) are disordered.

It belongs to the bacterial ribosomal protein bL27 family.

The protein is Large ribosomal subunit protein bL27 of Prochlorococcus marinus (strain MIT 9515).